The primary structure comprises 209 residues: Thymidine kinase (209 aa).

Residues 9-16 (AAMNAGKS) and 88-91 (DEAQ) each bind ATP. E89 (proton acceptor) is an active-site residue. Zn(2+) contacts are provided by C146, C148, C183, and H186.

The protein belongs to the thymidine kinase family. In terms of assembly, homotetramer.

It is found in the cytoplasm. It carries out the reaction thymidine + ATP = dTMP + ADP + H(+). This Legionella pneumophila subsp. pneumophila (strain Philadelphia 1 / ATCC 33152 / DSM 7513) protein is Thymidine kinase.